The following is a 382-amino-acid chain: Dual-specificity RNA methyltransferase RlmN (382 aa).

E94 serves as the catalytic Proton acceptor. Residues 100–336 (EANRGTLCVS…NTITRKTRGD (237 aa)) form the Radical SAM core domain. A disulfide bridge links C107 with C342. The [4Fe-4S] cluster site is built by C114, C118, and C121. Residues 168–169 (GE), S200, 222–224 (SLH), and N299 contribute to the S-adenosyl-L-methionine site. The active-site S-methylcysteine intermediate is C342.

The protein belongs to the radical SAM superfamily. RlmN family. [4Fe-4S] cluster serves as cofactor.

Its subcellular location is the cytoplasm. The enzyme catalyses adenosine(2503) in 23S rRNA + 2 reduced [2Fe-2S]-[ferredoxin] + 2 S-adenosyl-L-methionine = 2-methyladenosine(2503) in 23S rRNA + 5'-deoxyadenosine + L-methionine + 2 oxidized [2Fe-2S]-[ferredoxin] + S-adenosyl-L-homocysteine. It catalyses the reaction adenosine(37) in tRNA + 2 reduced [2Fe-2S]-[ferredoxin] + 2 S-adenosyl-L-methionine = 2-methyladenosine(37) in tRNA + 5'-deoxyadenosine + L-methionine + 2 oxidized [2Fe-2S]-[ferredoxin] + S-adenosyl-L-homocysteine. Functionally, specifically methylates position 2 of adenine 2503 in 23S rRNA and position 2 of adenine 37 in tRNAs. m2A2503 modification seems to play a crucial role in the proofreading step occurring at the peptidyl transferase center and thus would serve to optimize ribosomal fidelity. The sequence is that of Dual-specificity RNA methyltransferase RlmN from Legionella pneumophila (strain Paris).